Here is a 364-residue protein sequence, read N- to C-terminus: UDP-3-O-acylglucosamine N-acyltransferase (364 aa).

The active-site Proton acceptor is histidine 257.

This sequence belongs to the transferase hexapeptide repeat family. LpxD subfamily. As to quaternary structure, homotrimer.

It carries out the reaction a UDP-3-O-[(3R)-3-hydroxyacyl]-alpha-D-glucosamine + a (3R)-hydroxyacyl-[ACP] = a UDP-2-N,3-O-bis[(3R)-3-hydroxyacyl]-alpha-D-glucosamine + holo-[ACP] + H(+). It functions in the pathway bacterial outer membrane biogenesis; LPS lipid A biosynthesis. Functionally, catalyzes the N-acylation of UDP-3-O-acylglucosamine using 3-hydroxyacyl-ACP as the acyl donor. Is involved in the biosynthesis of lipid A, a phosphorylated glycolipid that anchors the lipopolysaccharide to the outer membrane of the cell. This Paracoccus denitrificans (strain Pd 1222) protein is UDP-3-O-acylglucosamine N-acyltransferase.